The chain runs to 222 residues: Histidinol-phosphatase (222 aa).

The Nucleophile role is filled by Asp8. Mg(2+) is bound by residues Asp8, Asp10, and Asp184. The active-site Proton donor is Asp10.

The protein belongs to the HAD-like hydrolase superfamily. SerB family. Mg(2+) is required as a cofactor.

The enzyme catalyses L-histidinol phosphate + H2O = L-histidinol + phosphate. Its pathway is amino-acid biosynthesis; L-histidine biosynthesis; L-histidine from 5-phospho-alpha-D-ribose 1-diphosphate: step 8/9. In terms of biological role, catalyzes the dephosphorylation of histidinol-phosphate to histidinol, the direct precursor of histidine. This is Histidinol-phosphatase from Neisseria meningitidis serogroup C (strain 8013).